Consider the following 283-residue polypeptide: uncharacterized protein (283 aa).

The FAD-binding FR-type domain occupies 4 to 131 (RPLHAFEVVA…MGPGGAYAPD (128 aa)).

This is an uncharacterized protein from Mycobacterium bovis (strain ATCC BAA-935 / AF2122/97).